A 350-amino-acid polypeptide reads, in one-letter code: Nicotinate-nucleotide--dimethylbenzimidazole phosphoribosyltransferase (350 aa).

Glutamate 317 serves as the catalytic Proton acceptor.

This sequence belongs to the CobT family.

It catalyses the reaction 5,6-dimethylbenzimidazole + nicotinate beta-D-ribonucleotide = alpha-ribazole 5'-phosphate + nicotinate + H(+). The protein operates within nucleoside biosynthesis; alpha-ribazole biosynthesis; alpha-ribazole from 5,6-dimethylbenzimidazole: step 1/2. Catalyzes the synthesis of alpha-ribazole-5'-phosphate from nicotinate mononucleotide (NAMN) and 5,6-dimethylbenzimidazole (DMB). The chain is Nicotinate-nucleotide--dimethylbenzimidazole phosphoribosyltransferase from Shewanella sp. (strain W3-18-1).